We begin with the raw amino-acid sequence, 157 residues long: MQIHLVFVGKTVFPDVETGIERYVSRLNHYLPTRIHYVKAEKIPPRGMESAVLEKECERILKLIGGKSNQLIVWDRTGKHLDSLEFARVLERLSNGGTGAVWMIIGGPLGISRELRDRANLVLALSEMTFPHDLARLIVAEQLYRAFTIIRGEPYHK.

S-adenosyl-L-methionine contacts are provided by residues Gly-106 and 125–130 (LSEMTF).

This sequence belongs to the RNA methyltransferase RlmH family. Homodimer.

The protein resides in the cytoplasm. The catalysed reaction is pseudouridine(1915) in 23S rRNA + S-adenosyl-L-methionine = N(3)-methylpseudouridine(1915) in 23S rRNA + S-adenosyl-L-homocysteine + H(+). Specifically methylates the pseudouridine at position 1915 (m3Psi1915) in 23S rRNA. This chain is Ribosomal RNA large subunit methyltransferase H, found in Syntrophobacter fumaroxidans (strain DSM 10017 / MPOB).